The following is a 116-amino-acid chain: Putative BPES syndrome breakpoint region protein (116 aa).

Seems to be expressed only in testis.

In Homo sapiens (Human), this protein is Putative BPES syndrome breakpoint region protein (BPESC1).